The primary structure comprises 732 residues: Translation initiation factor eIF2B subunit epsilon (732 aa).

Residues 559–726 (GEEEEDFGVE…QEADEEDSDE (168 aa)) enclose the W2 domain.

It belongs to the eIF-2B gamma/epsilon subunits family. Component of the translation initiation factor 2B (eIF2B) complex which is a heterodecamer of two sets of five different subunits: alpha, beta, gamma, delta and epsilon. Subunits alpha, beta and delta comprise a regulatory subcomplex and subunits epsilon and gamma comprise a catalytic subcomplex. Within the complex, the hexameric regulatory complex resides at the center, with the two heterodimeric catalytic subcomplexes bound on opposite sides.

The protein resides in the cytoplasm. The protein localises to the cytosol. In terms of biological role, acts as a component of the translation initiation factor 2B (eIF2B) complex, which catalyzes the exchange of GDP for GTP on the eukaryotic initiation factor 2 (eIF2) complex gamma subunit. Its guanine nucleotide exchange factor activity is repressed when bound to eIF2 complex phosphorylated on the alpha subunit, thereby limiting the amount of methionyl-initiator methionine tRNA available to the ribosome and consequently global translation is repressed. The chain is Translation initiation factor eIF2B subunit epsilon (GCD6) from Candida albicans (strain SC5314 / ATCC MYA-2876) (Yeast).